We begin with the raw amino-acid sequence, 234 residues long: Orotidine 5'-phosphate decarboxylase (234 aa).

Residues Asp-11, Lys-33, Asp-60–Thr-69, Thr-120, Arg-181, Gln-190, Gly-210, and Arg-211 each bind substrate. The active-site Proton donor is the Lys-62.

The protein belongs to the OMP decarboxylase family. Type 1 subfamily. As to quaternary structure, homodimer.

It carries out the reaction orotidine 5'-phosphate + H(+) = UMP + CO2. The protein operates within pyrimidine metabolism; UMP biosynthesis via de novo pathway; UMP from orotate: step 2/2. Catalyzes the decarboxylation of orotidine 5'-monophosphate (OMP) to uridine 5'-monophosphate (UMP). The sequence is that of Orotidine 5'-phosphate decarboxylase from Aliivibrio salmonicida (strain LFI1238) (Vibrio salmonicida (strain LFI1238)).